We begin with the raw amino-acid sequence, 120 residues long: Fluoride-specific ion channel FluC (120 aa).

Transmembrane regions (helical) follow at residues 30–50 (FGTL…YGLL), 66–86 (VGFL…LLLL), and 96–116 (LNII…LQLV). Na(+) is bound by residues Gly-70 and Thr-73.

This sequence belongs to the fluoride channel Fluc/FEX (TC 1.A.43) family.

It localises to the cell inner membrane. The catalysed reaction is fluoride(in) = fluoride(out). With respect to regulation, na(+) is not transported, but it plays an essential structural role and its presence is essential for fluoride channel function. Its function is as follows. Fluoride-specific ion channel. Important for reducing fluoride concentration in the cell, thus reducing its toxicity. The polypeptide is Fluoride-specific ion channel FluC (Pseudoalteromonas translucida (strain TAC 125)).